Here is a 311-residue protein sequence, read N- to C-terminus: Bifunctional protein FolD (311 aa).

Residues 184–186 (GAS), I209, and I250 contribute to the NADP(+) site.

This sequence belongs to the tetrahydrofolate dehydrogenase/cyclohydrolase family. Homodimer.

The enzyme catalyses (6R)-5,10-methylene-5,6,7,8-tetrahydrofolate + NADP(+) = (6R)-5,10-methenyltetrahydrofolate + NADPH. It carries out the reaction (6R)-5,10-methenyltetrahydrofolate + H2O = (6R)-10-formyltetrahydrofolate + H(+). It participates in one-carbon metabolism; tetrahydrofolate interconversion. Catalyzes the oxidation of 5,10-methylenetetrahydrofolate to 5,10-methenyltetrahydrofolate and then the hydrolysis of 5,10-methenyltetrahydrofolate to 10-formyltetrahydrofolate. The chain is Bifunctional protein FolD from Gluconacetobacter diazotrophicus (strain ATCC 49037 / DSM 5601 / CCUG 37298 / CIP 103539 / LMG 7603 / PAl5).